We begin with the raw amino-acid sequence, 420 residues long: UDP-N-acetylglucosamine 1-carboxyvinyltransferase (420 aa).

22-23 provides a ligand contact to phosphoenolpyruvate; sequence KN. R91 is a UDP-N-acetyl-alpha-D-glucosamine binding site. C115 acts as the Proton donor in catalysis. A 2-(S-cysteinyl)pyruvic acid O-phosphothioketal modification is found at C115. UDP-N-acetyl-alpha-D-glucosamine-binding positions include 120–124, 160–163, D305, and I327; these read RPVDL and KVSV.

It belongs to the EPSP synthase family. MurA subfamily.

Its subcellular location is the cytoplasm. The enzyme catalyses phosphoenolpyruvate + UDP-N-acetyl-alpha-D-glucosamine = UDP-N-acetyl-3-O-(1-carboxyvinyl)-alpha-D-glucosamine + phosphate. It functions in the pathway cell wall biogenesis; peptidoglycan biosynthesis. Its function is as follows. Cell wall formation. Adds enolpyruvyl to UDP-N-acetylglucosamine. In Pectobacterium carotovorum subsp. carotovorum (strain PC1), this protein is UDP-N-acetylglucosamine 1-carboxyvinyltransferase.